Consider the following 77-residue polypeptide: U8-lycotoxin-Ls1s (77 aa).

Residues 1–20 (MKLIIFTGLVLFAIVSLIEA) form the signal peptide. A propeptide spanning residues 21-26 (QAENER) is cleaved from the precursor.

This sequence belongs to the neurotoxin 19 (CSTX) family. 08 (U8-Lctx) subfamily. Post-translationally, contains 4 disulfide bonds. Expressed by the venom gland.

The protein localises to the secreted. The polypeptide is U8-lycotoxin-Ls1s (Lycosa singoriensis (Wolf spider)).